A 264-amino-acid chain; its full sequence is Thymidylate synthase (264 aa).

DUMP contacts are provided by residues R21 and R126 to R127. C146 (nucleophile) is an active-site residue. Residues R166–D169, N177, and H207–Y209 contribute to the dUMP site. D169 is a binding site for (6R)-5,10-methylene-5,6,7,8-tetrahydrofolate. (6R)-5,10-methylene-5,6,7,8-tetrahydrofolate is bound at residue A263.

The protein belongs to the thymidylate synthase family. Bacterial-type ThyA subfamily. In terms of assembly, homodimer.

It is found in the cytoplasm. The catalysed reaction is dUMP + (6R)-5,10-methylene-5,6,7,8-tetrahydrofolate = 7,8-dihydrofolate + dTMP. The protein operates within pyrimidine metabolism; dTTP biosynthesis. In terms of biological role, catalyzes the reductive methylation of 2'-deoxyuridine-5'-monophosphate (dUMP) to 2'-deoxythymidine-5'-monophosphate (dTMP) while utilizing 5,10-methylenetetrahydrofolate (mTHF) as the methyl donor and reductant in the reaction, yielding dihydrofolate (DHF) as a by-product. This enzymatic reaction provides an intracellular de novo source of dTMP, an essential precursor for DNA biosynthesis. The polypeptide is Thymidylate synthase (Nitrobacter hamburgensis (strain DSM 10229 / NCIMB 13809 / X14)).